The primary structure comprises 840 residues: Telomere length regulation protein TEL2 homolog (840 aa).

Residue Met1 is modified to N-acetylmethionine. Residues Pro374, Pro419, and Pro422 each carry the hydroxyproline modification. Residues 443–497 (PEPAGDCSSVSRGPSPAPVDTESPVEMPEKAVESDVPPTQPQGSDSELDSDDEFI) form a disordered region. Phosphoserine is present on Ser457. The residue at position 486 (Ser486) is a Phosphoserine; by CK2. A phosphoserine mark is found at Ser488, Ser492, and Ser837. Acidic residues predominate over residues 488 to 497 (SELDSDDEFI).

This sequence belongs to the TEL2 family. As to quaternary structure, component of the TTT complex composed of TELO2, TTI1 and TTI2. Interacts with ATM, ATR, MTOR, PRKDC, RUVBL2, TTI1, TTI2, SMG1 and TRRAP. Component of the mTORC1 and mTORC2 complexes. Interacts (phosphorylated form) with PIH1D1. Interaction with PIH1D1 mediates interaction of TELO2 with the R2TP complex composed of RUVBL1, RUVBL2, PIH1D1, and RPAP3. Post-translationally, hydroxylation by PHD3 is required for a proper interaction with ATR, and activation of the ATR/CHK1/p53 pathway following DNA damage. In terms of processing, phosphorylated at Ser-486 by CK2 following growth factor deprivation, leading to its subsequent ubiquitination by the SCF(FBXO9) complex. Phosphorylation by CK2 only takes place when TELO2 is bound to mTORC1, not mTORC2; leading to selective ubiquitination of mTORC1-associated protein. Ubiquitinated by the SCF(FBXO9) complex following phosphorylation by CK2 in response to growth factor deprivation, leading to its degradation by the proteasome. Only mTORC1-associated protein is ubiquitinated and degraded, leading to selective inactivation of mTORC1 to restrain cell growth and protein translation, while mTORC2 is activated due to the relief of feedback inhibition by mTORC1.

The protein resides in the cytoplasm. It localises to the membrane. Its subcellular location is the nucleus. It is found in the chromosome. The protein localises to the telomere. Functionally, regulator of the DNA damage response (DDR). Part of the TTT complex that is required to stabilize protein levels of the phosphatidylinositol 3-kinase-related protein kinase (PIKK) family proteins. The TTT complex is involved in the cellular resistance to DNA damage stresses, like ionizing radiation (IR), ultraviolet (UV) and mitomycin C (MMC). Together with the TTT complex and HSP90 may participate in the proper folding of newly synthesized PIKKs. Promotes assembly, stabilizes and maintains the activity of mTORC1 and mTORC2 complexes, which regulate cell growth and survival in response to nutrient and hormonal signals. May be involved in telomere length regulation. The chain is Telomere length regulation protein TEL2 homolog (Telo2) from Mus musculus (Mouse).